Reading from the N-terminus, the 427-residue chain is tRNA pseudouridine synthase Pus10 (427 aa).

Asp240 serves as the catalytic Nucleophile. Substrate-binding residues include Tyr306 and Tyr378.

Belongs to the pseudouridine synthase Pus10 family.

It carries out the reaction uridine(54) in tRNA = pseudouridine(54) in tRNA. The catalysed reaction is uridine(55) in tRNA = pseudouridine(55) in tRNA. Responsible for synthesis of pseudouridine from uracil-54 and uracil-55 in the psi GC loop of transfer RNAs. The chain is tRNA pseudouridine synthase Pus10 from Halorubrum lacusprofundi (strain ATCC 49239 / DSM 5036 / JCM 8891 / ACAM 34).